A 315-amino-acid chain; its full sequence is Ribonuclease Z (315 aa).

Positions 62, 64, 66, 67, 144, 215, and 273 each coordinate Zn(2+). Catalysis depends on Asp-66, which acts as the Proton acceptor.

This sequence belongs to the RNase Z family. Homodimer. It depends on Zn(2+) as a cofactor.

It carries out the reaction Endonucleolytic cleavage of RNA, removing extra 3' nucleotides from tRNA precursor, generating 3' termini of tRNAs. A 3'-hydroxy group is left at the tRNA terminus and a 5'-phosphoryl group is left at the trailer molecule.. Functionally, zinc phosphodiesterase, which displays some tRNA 3'-processing endonuclease activity. Probably involved in tRNA maturation, by removing a 3'-trailer from precursor tRNA. The polypeptide is Ribonuclease Z (Synechococcus sp. (strain CC9311)).